A 195-amino-acid chain; its full sequence is dTTP/UTP pyrophosphatase (195 aa).

Asp-77 acts as the Proton acceptor in catalysis.

It belongs to the Maf family. YhdE subfamily. It depends on a divalent metal cation as a cofactor.

It is found in the cytoplasm. The enzyme catalyses dTTP + H2O = dTMP + diphosphate + H(+). It carries out the reaction UTP + H2O = UMP + diphosphate + H(+). Functionally, nucleoside triphosphate pyrophosphatase that hydrolyzes dTTP and UTP. May have a dual role in cell division arrest and in preventing the incorporation of modified nucleotides into cellular nucleic acids. The sequence is that of dTTP/UTP pyrophosphatase from Flavobacterium psychrophilum (strain ATCC 49511 / DSM 21280 / CIP 103535 / JIP02/86).